The sequence spans 456 residues: Protein shifted (456 aa).

The N-terminal stretch at 1–30 (MTHQGIGCLVKWLYLVLIVHTLLCIGQLEC) is a signal peptide. Positions 34–112 (HHNRNNNNNN…GGGGSRHNRN (79 aa)) are disordered. A compositionally biased stretch (basic and acidic residues) spans 44–55 (RRADSSSSEEGH). The N-linked (GlcNAc...) asparagine glycan is linked to N57. The span at 77–87 (HQPRRGQRKKQ) shows a compositional bias: basic residues. A compositionally biased stretch (gly residues) spans 88 to 107 (QGGGGGGSGGGGGNGGGGGS). Residues 119–261 (LWINEQQLKM…PIRLNFKKEC (143 aa)) enclose the WIF domain. N-linked (GlcNAc...) asparagine glycosylation is found at N173, N217, and N227. Cystine bridges form between C224–C261, C283–C293, C287–C299, C301–C310, C315–C325, C319–C331, C333–C342, C347–C357, C351–C363, C365–C374, C379–C389, C383–C395, C397–C406, C416–C423, C418–C429, and C431–C440. 5 consecutive EGF-like domains span residues 279–311 (TLQECSLKCGKNGYCNEHHICKCNVGYTGQYCE), 315–342 (CFPQCLNGGNCTAPSVCTCPEGYQGTQC), 343–375 (EGGICKDKCLNGGKCIQKDKCQCSKGYYGLRCE), 376–407 (YSKCVIPCKNEGRCIGNNLCRCPNGLRGDHCE), and 412–441 (QRSICKCRNGTCVSHKHCKCHPGFYGRHCN). N-linked (GlcNAc...) asparagine glycosylation occurs at N324. The N-linked (GlcNAc...) asparagine glycan is linked to N420.

As to quaternary structure, interacts with hh. At the blastoderm stage, it is ubiquitously expressed. As embryogenesis continues, it is expressed in the epidermis and central nervous system, this expression being segmentally modulated. Also highly expressed at the foregut and hindgut throughout embryogenesis. In third instar wing imaginal disks, it is highly expressed in the most anterior and posterior parts of the disk and weakly expressed at the antero/posterior (A/P) compartment border. In the leg disks and the antenna part of the eye-antennal imaginal disk it is also weakly expressed at the A/P compartment border. Weakly expressed in the morphogenetic furrow in the eye primordium.

It localises to the secreted. The protein resides in the extracellular space. Its subcellular location is the extracellular matrix. In terms of biological role, required for normal accumulation and movement of lipid-modified hedgehog (hh) morphogen. May act by stabilizing the interaction between heparan sulfate proteoglycans (HSPGs) and hh, HSPGs being required for diffusion of hh morphogen. Not involved in wingless (wg) morphogen movement, suggesting that it may provide HSPG specificity for Hh. This chain is Protein shifted (shf), found in Drosophila melanogaster (Fruit fly).